The sequence spans 456 residues: GTPase Der (456 aa).

EngA-type G domains lie at 2 to 167 (LKVA…DQFG) and 176 to 351 (ATFC…AQLK). GTP contacts are provided by residues 8–15 (GKPNVGKS), 55–59 (DTGGL), 118–121 (NKIE), 182–189 (GKPNVGKS), 229–233 (DTAGI), and 294–297 (NKWD). A KH-like domain is found at 352 to 436 (IKISTSLLND…PITLYFKSKN (85 aa)).

The protein belongs to the TRAFAC class TrmE-Era-EngA-EngB-Septin-like GTPase superfamily. EngA (Der) GTPase family. In terms of assembly, associates with the 50S ribosomal subunit.

In terms of biological role, GTPase that plays an essential role in the late steps of ribosome biogenesis. This Mycoplasmoides gallisepticum (strain R(low / passage 15 / clone 2)) (Mycoplasma gallisepticum) protein is GTPase Der.